We begin with the raw amino-acid sequence, 439 residues long: ATP-dependent protease ATPase subunit HslU (439 aa).

Residues Ile17, 59–64, Asp251, Glu317, and Arg389 each bind ATP; that span reads GVGKTE.

Belongs to the ClpX chaperone family. HslU subfamily. A double ring-shaped homohexamer of HslV is capped on each side by a ring-shaped HslU homohexamer. The assembly of the HslU/HslV complex is dependent on binding of ATP.

It is found in the cytoplasm. Its function is as follows. ATPase subunit of a proteasome-like degradation complex; this subunit has chaperone activity. The binding of ATP and its subsequent hydrolysis by HslU are essential for unfolding of protein substrates subsequently hydrolyzed by HslV. HslU recognizes the N-terminal part of its protein substrates and unfolds these before they are guided to HslV for hydrolysis. This Campylobacter jejuni subsp. jejuni serotype O:6 (strain 81116 / NCTC 11828) protein is ATP-dependent protease ATPase subunit HslU.